Here is a 399-residue protein sequence, read N- to C-terminus: S-adenosylmethionine synthase (399 aa).

ATP is bound at residue His19. Mg(2+) is bound at residue Asp21. K(+) is bound at residue Glu47. 2 residues coordinate L-methionine: Glu60 and Gln103. Residues 103 to 113 (QSPDIAQGVNQ) are flexible loop. Residues 179–181 (DGK), 246–247 (RF), Asp255, 261–262 (RK), Ala278, and Lys282 each bind ATP. An L-methionine-binding site is contributed by Asp255. L-methionine is bound at residue Lys286.

This sequence belongs to the AdoMet synthase family. Homotetramer; dimer of dimers. It depends on Mg(2+) as a cofactor. K(+) is required as a cofactor.

The protein localises to the cytoplasm. It carries out the reaction L-methionine + ATP + H2O = S-adenosyl-L-methionine + phosphate + diphosphate. Its pathway is amino-acid biosynthesis; S-adenosyl-L-methionine biosynthesis; S-adenosyl-L-methionine from L-methionine: step 1/1. Catalyzes the formation of S-adenosylmethionine (AdoMet) from methionine and ATP. The overall synthetic reaction is composed of two sequential steps, AdoMet formation and the subsequent tripolyphosphate hydrolysis which occurs prior to release of AdoMet from the enzyme. This is S-adenosylmethionine synthase from Halalkalibacterium halodurans (strain ATCC BAA-125 / DSM 18197 / FERM 7344 / JCM 9153 / C-125) (Bacillus halodurans).